Consider the following 234-residue polypeptide: CD-NTase-associated protein 13 (234 aa).

Residues 20-42 (TIMKNVIANVSTAITLALMILWI) form a helical membrane-spanning segment.

This sequence in the C-terminal section; belongs to the bacterial STING family.

The protein localises to the cell inner membrane. Effector protein of a CBASS antivirus system. CBASS (cyclic oligonucleotide-based antiphage signaling system) provides immunity against bacteriophage. The CD-NTase protein synthesizes cyclic nucleotides in response to infection; these serve as specific second messenger signals. The signals activate a diverse range of effectors, leading to bacterial cell death and thus abortive phage infection. A type I-D CBASS(GG) system. In terms of biological role, binds c-di-GMP (synthesized by the cognate CdnE encoded upstream in the same operon) and about 10-fold less well 3'3'-cGAMP, but not c-di-AMP, 2'3'-cGAMP or cUMP-AMP (tested with a protein without the transmembrane region). The effector protein for this CBASS system, its activity is stimulated by c-di-GMP and leads to cell death. This Roseivirga ehrenbergii (strain DSM 102268 / JCM 13514 / KCTC 12282 / NCIMB 14502 / KMM 6017) protein is CD-NTase-associated protein 13.